We begin with the raw amino-acid sequence, 341 residues long: UDP-3-O-acylglucosamine N-acyltransferase (341 aa).

The active-site Proton acceptor is His242.

Belongs to the transferase hexapeptide repeat family. LpxD subfamily. As to quaternary structure, homotrimer.

The enzyme catalyses a UDP-3-O-[(3R)-3-hydroxyacyl]-alpha-D-glucosamine + a (3R)-hydroxyacyl-[ACP] = a UDP-2-N,3-O-bis[(3R)-3-hydroxyacyl]-alpha-D-glucosamine + holo-[ACP] + H(+). Its pathway is bacterial outer membrane biogenesis; LPS lipid A biosynthesis. In terms of biological role, catalyzes the N-acylation of UDP-3-O-acylglucosamine using 3-hydroxyacyl-ACP as the acyl donor. Is involved in the biosynthesis of lipid A, a phosphorylated glycolipid that anchors the lipopolysaccharide to the outer membrane of the cell. This is UDP-3-O-acylglucosamine N-acyltransferase from Haemophilus influenzae (strain 86-028NP).